The primary structure comprises 71 residues: Protein SlyX homolog (71 aa).

Belongs to the SlyX family.

The polypeptide is Protein SlyX homolog (Rhodospirillum rubrum (strain ATCC 11170 / ATH 1.1.1 / DSM 467 / LMG 4362 / NCIMB 8255 / S1)).